The primary structure comprises 434 residues: Acyl transferase 15 (434 aa).

Residues histidine 164 and aspartate 371 each act as proton acceptor in the active site.

The protein belongs to the plant acyltransferase family.

Functionally, involved in the incorporation of ferulate into the cell wall. The chain is Acyl transferase 15 from Oryza sativa subsp. japonica (Rice).